Consider the following 126-residue polypeptide: Fluoride-specific ion channel FluC (126 aa).

4 helical membrane passes run 2 to 22, 37 to 57, 65 to 85, and 99 to 119; these read LITVLNVALGGAIGASCRYLI, VGVLGVNILGSALMGAFVVLA, LSPFVMTGVLGGFTTFSAFSL, and AALYIGLSAGLSIAALALGMM. Gly-75 and Thr-78 together coordinate Na(+).

It belongs to the fluoride channel Fluc/FEX (TC 1.A.43) family.

It is found in the cell inner membrane. The enzyme catalyses fluoride(in) = fluoride(out). Its activity is regulated as follows. Na(+) is not transported, but it plays an essential structural role and its presence is essential for fluoride channel function. Functionally, fluoride-specific ion channel. Important for reducing fluoride concentration in the cell, thus reducing its toxicity. The polypeptide is Fluoride-specific ion channel FluC (Ruegeria sp. (strain TM1040) (Silicibacter sp.)).